The following is a 335-amino-acid chain: Phosphate acyltransferase (335 aa).

Belongs to the PlsX family. Homodimer. Probably interacts with PlsY.

Its subcellular location is the cytoplasm. The catalysed reaction is a fatty acyl-[ACP] + phosphate = an acyl phosphate + holo-[ACP]. It functions in the pathway lipid metabolism; phospholipid metabolism. Functionally, catalyzes the reversible formation of acyl-phosphate (acyl-PO(4)) from acyl-[acyl-carrier-protein] (acyl-ACP). This enzyme utilizes acyl-ACP as fatty acyl donor, but not acyl-CoA. The sequence is that of Phosphate acyltransferase from Desulfitobacterium hafniense (strain Y51).